A 186-amino-acid polypeptide reads, in one-letter code: Elongation factor P (186 aa).

Belongs to the elongation factor P family.

It localises to the cytoplasm. It functions in the pathway protein biosynthesis; polypeptide chain elongation. Functionally, involved in peptide bond synthesis. Stimulates efficient translation and peptide-bond synthesis on native or reconstituted 70S ribosomes in vitro. Probably functions indirectly by altering the affinity of the ribosome for aminoacyl-tRNA, thus increasing their reactivity as acceptors for peptidyl transferase. The sequence is that of Elongation factor P from Shewanella baltica (strain OS223).